The following is a 475-amino-acid chain: Aspartyl/glutamyl-tRNA(Asn/Gln) amidotransferase subunit B (475 aa).

Belongs to the GatB/GatE family. GatB subfamily. In terms of assembly, heterotrimer of A, B and C subunits.

The catalysed reaction is L-glutamyl-tRNA(Gln) + L-glutamine + ATP + H2O = L-glutaminyl-tRNA(Gln) + L-glutamate + ADP + phosphate + H(+). It carries out the reaction L-aspartyl-tRNA(Asn) + L-glutamine + ATP + H2O = L-asparaginyl-tRNA(Asn) + L-glutamate + ADP + phosphate + 2 H(+). In terms of biological role, allows the formation of correctly charged Asn-tRNA(Asn) or Gln-tRNA(Gln) through the transamidation of misacylated Asp-tRNA(Asn) or Glu-tRNA(Gln) in organisms which lack either or both of asparaginyl-tRNA or glutaminyl-tRNA synthetases. The reaction takes place in the presence of glutamine and ATP through an activated phospho-Asp-tRNA(Asn) or phospho-Glu-tRNA(Gln). This Thermodesulfovibrio yellowstonii (strain ATCC 51303 / DSM 11347 / YP87) protein is Aspartyl/glutamyl-tRNA(Asn/Gln) amidotransferase subunit B.